The following is a 265-amino-acid chain: MADS-box protein JOINTLESS (265 aa).

Residues 3 to 57 form the MADS-box domain; the sequence is REKIQIKKIDNSTARQVTFSKRRRGLFKKAEELSVLCDADVALIIFSSTGKLFDY. The region spanning 87 to 177 is the K-box domain; it reads QLVENSNYSR…RQQVMEISNN (91 aa). The interval 196–232 is disordered; the sequence is ENGFNNNNNEDGQSSESVTNPCNSIDPPPQDDDSSDT. Residues 205–218 are compositionally biased toward polar residues; sequence EDGQSSESVTNPCN.

In terms of tissue distribution, widely expressed with highest levels in shoot tips and axillary buds. Also found in fully developed pedicels and flowers.

The protein localises to the nucleus. Its function is as follows. Putative transcription factor that coordinates gene expression underlying the differentiation of the pedicel abscission zone. May also be involved in the maintenance of the inflorescence meristem state. This is MADS-box protein JOINTLESS (J) from Solanum lycopersicum (Tomato).